A 295-amino-acid polypeptide reads, in one-letter code: Protoheme IX farnesyltransferase (295 aa).

9 consecutive transmembrane segments (helical) span residues 9-29, 36-56, 80-100, 108-128, 135-155, 163-183, 209-229, 230-250, and 265-285; these read ITKPGIIFGNVLSVAGGFFLA, FGVFLAAVIGTSLVVASGCVF, LVSLKLALLYATLLGIAGVAL, LAALFAVIGFVIYVGFYSLYL, GTLVGSLSGAMPPVIGYCAVS, LTLLVMFSLWQMPHSYAIAIF, ILLYILAFLVATLMLTVGGYA, GLNYLAVAAGMGMYWLYMAWK, and FVFSIFTITALSVMMSVDFQV.

The protein belongs to the UbiA prenyltransferase family. Protoheme IX farnesyltransferase subfamily.

Its subcellular location is the cell inner membrane. It catalyses the reaction heme b + (2E,6E)-farnesyl diphosphate + H2O = Fe(II)-heme o + diphosphate. It functions in the pathway porphyrin-containing compound metabolism; heme O biosynthesis; heme O from protoheme: step 1/1. Functionally, converts heme B (protoheme IX) to heme O by substitution of the vinyl group on carbon 2 of heme B porphyrin ring with a hydroxyethyl farnesyl side group. The polypeptide is Protoheme IX farnesyltransferase (Pseudomonas syringae pv. tomato (strain ATCC BAA-871 / DC3000)).